A 1017-amino-acid polypeptide reads, in one-letter code: MEPSPAKGKAQGRLLVSTSLDAKDELEERLERCMSITTSITNGLSEREANDALTAHVCKGPQQHEEVCLGLFTLLLTEPPQAQRCYRDLTLVNRDGMNVVLMKINQILMEKFLKLQDVCRTQLVWLVRELVKSGVIGADGVLMTLMKQIAGGDISSKNLWLAENVLDILVDQREWVLKSGMLVAMSLYTYLRLIVDHGTTSLLPLRQREVDFCIGLLRERFMECFIIGRDLVRLLQNVARIPEMELVWRDLLHSPQTLSPQFTGILQLLTSRTSRKFLACRLTPDMETKLLFMTSRVRFGQQKRYQDWFQRQYLSTAESQSLRCDLIRYICGVVHPSNEVLSSDILPRWAIIGWLLTTCTSNVAASNAKLALFYDWLFFNPEKDSIMNIEPAILVMHHSMKPHPAITATLLDFMCRIIPHFFPPLEGQVRQGVFNSLNFIMEKRVLAHLAPLFDNPKLDRELRSMLRERFPEFCSSPSPPTEVKMEESVPLEMDNHVLDKEDGCYDNTDATFSDDEEELNNKGKKREFRFHQLKETYIDEPSDITPFVDQLDEALKERVLQLQKGSDTETHCEVMQEIVDLILEEDFDSEQMSTLASCLAELFKSHFRGDVLPEEITEESLEESVCKPVCLIFRNLCQMQEDNSGFSVLLDLLAELYQKQPKIGYHLLYYLKASKAASGKMSLYESFAQATALGDLHTCLMMDMKACQEDDVRLLCYLTPSIYSEFPDETLRSGELLNMIVAVIDSAQLQELMCHVMMGNLVMFRKDSVLNILIQSLDWETFEQYSTWQLFLAHSIPLETIIPILQHLKYKEHPEALSCLLLQLRREKPSEEMVKMVLSRPYHQEDQFTTSILRHWTAKHDDLLGEHIKALLIKNNNMPRKRQSLRSSSSKLAQLTLEQMLEHLDSLRLSLSNTKNNFFSQTPILQALQHVQASCDEAHKMRFSDLFSLAEEYEDSSKPPKSRRKAPASSPRSRKGAAPQPCNEEESVSSSASEEEDSKPKASKRKRKGSAVGSDSD.

The disordered stretch occupies residues E952–D1017. The span at N983–D997 shows a compositional bias: acidic residues.

The protein belongs to the Integrator subunit 3 family. As to quaternary structure, component of the Integrator complex, composed of core subunits INTS1, INTS2, INTS3, INTS4, INTS5, INTS6, INTS7, INTS8, INTS9/RC74, INTS10, INTS11/CPSF3L, INTS12, INTS13, INTS14 and INTS15. The core complex associates with protein phosphatase 2A subunits PPP2CA and PPP2R1A, to form the Integrator-PP2A (INTAC) complex. Component of the SOSS complex.

The protein localises to the nucleus. Its subcellular location is the cytoplasm. In terms of biological role, component of the integrator complex, a multiprotein complex that terminates RNA polymerase II (Pol II) transcription in the promoter-proximal region of genes. The integrator complex provides a quality checkpoint during transcription elongation by driving premature transcription termination of transcripts that are unfavorably configured for transcriptional elongation: the complex terminates transcription by (1) catalyzing dephosphorylation of the C-terminal domain (CTD) of Pol II subunit POLR2A/RPB1 and SUPT5H/SPT5, (2) degrading the exiting nascent RNA transcript via endonuclease activity and (3) promoting the release of Pol II from bound DNA. The integrator complex is also involved in terminating the synthesis of non-coding Pol II transcripts, such as enhancer RNAs (eRNAs), small nuclear RNAs (snRNAs), telomerase RNAs and long non-coding RNAs (lncRNAs). Within the integrator complex, INTS3 is involved in the post-termination step: INTS3 binds INTS7 in the open conformation of integrator complex and prevents the rebinding of Pol II to the integrator after termination cycle. Functionally, component of the SOSS complex, a multiprotein complex that functions downstream of the MRN complex to promote DNA repair and G2/M checkpoint. The SOSS complex associates with single-stranded DNA at DNA lesions and influences diverse endpoints in the cellular DNA damage response including cell-cycle checkpoint activation, recombinational repair and maintenance of genomic stability. The SOSS complex is required for efficient homologous recombination-dependent repair of double-strand breaks (DSBs) and ATM-dependent signaling pathways. In the SOSS complex, it is required for the assembly of the complex and for stabilization of the complex at DNA damage sites. The chain is Integrator complex subunit 3 (ints3) from Danio rerio (Zebrafish).